The primary structure comprises 70 residues: Deleted in esophageal cancer 1 (70 aa).

In terms of tissue distribution, expressed in many tissues, with highest expression in prostate and testis. Reduced expression in esophageal carcinomas.

Functionally, candidate tumor suppressor. The sequence is that of Deleted in esophageal cancer 1 from Homo sapiens (Human).